The primary structure comprises 374 residues: Protein TAB2 homolog, chloroplastic (374 aa).

Residues 1-64 constitute a chloroplast transit peptide; it reads MATLGFNTRR…SLSITKEQEV (64 aa). Positions 58–84 are disordered; the sequence is ITKEQEVANEVEEDDPTSELSYLDPES. Residues 64–74 are compositionally biased toward acidic residues; that stretch reads VANEVEEDDPT.

It localises to the plastid. The protein localises to the chloroplast. In terms of biological role, nuclear genome-encoded A/U-rich RNA-binding protein involved in the biogenesis of photosystem I (PSI) and II (PSII). Required for the light-controlled accumulation of PSI and PSII during early plant development. Does not seem to be required for the translation of mRNAs of the PSI subunits. This is Protein TAB2 homolog, chloroplastic from Arabidopsis thaliana (Mouse-ear cress).